A 37-amino-acid polypeptide reads, in one-letter code: Large ribosomal subunit protein bL36 (37 aa).

This sequence belongs to the bacterial ribosomal protein bL36 family.

The polypeptide is Large ribosomal subunit protein bL36 (Halorhodospira halophila (strain DSM 244 / SL1) (Ectothiorhodospira halophila (strain DSM 244 / SL1))).